A 179-amino-acid chain; its full sequence is Adenylyl-sulfate kinase (179 aa).

13-20 is an ATP binding site; that stretch reads GLSGAGKS. The active-site Phosphoserine intermediate is the Ser87.

This sequence belongs to the APS kinase family.

It catalyses the reaction adenosine 5'-phosphosulfate + ATP = 3'-phosphoadenylyl sulfate + ADP + H(+). Its pathway is sulfur metabolism; hydrogen sulfide biosynthesis; sulfite from sulfate: step 2/3. In terms of biological role, catalyzes the synthesis of activated sulfate. In Paraburkholderia xenovorans (strain LB400), this protein is Adenylyl-sulfate kinase.